The sequence spans 1048 residues: 3-hydroxy-3-methylglutaryl-coenzyme A reductase (1048 aa).

Residues 1 to 32 (MDPVVRKPDPGGVQHRVTKALRAIVGHACRHP) lie on the Cytoplasmic side of the membrane. The helical transmembrane segment at 33-53 (IHTLLVTALTAATTHLHVLEG) threads the bilayer. Over 54-220 (TYQATHRGLA…FLHRVHHAET (167 aa)) the chain is Lumenal. A helical transmembrane segment spans residues 221-241 (VDLVIIGLSYLAMNMTVVSLF). An SSD domain is found at 222 to 403 (DLVIIGLSYL…FTFYATILCV (182 aa)). At 242-250 (RVMRHLGSR) the chain is on the cytoplasmic side. A helical transmembrane segment spans residues 251 to 271 (FWLAASVLLSGAFAFVLGLGI). Topologically, residues 272–276 (TTTCD) are lumenal. Residues 277-297 (VPVDMLLLFEGIPYLVLTVGF) traverse the membrane as a helical segment. Residues 298 to 348 (EKPIQLTRAVLCVSEELWGGGQRQVPNGASSDDSRQNQLIPNIIQLAVDRE) are Cytoplasmic-facing. Residues 349–369 (GWYIVRSYLLEIGALALGAVL) traverse the membrane as a helical segment. Topologically, residues 370 to 377 (RPKDSLGH) are lumenal. Residues 378–398 (FCFLAAWTLLIDAVLLFTFYA) form a helical membrane-spanning segment. Over 399–439 (TILCVKLEITRIRSPGGLGQVNAKHPSGIFGHKVKSTNITW) the chain is Cytoplasmic. Residues 440 to 460 (WKLLTVGGFVLCHFLQLSPFF) form a helical membrane-spanning segment. Residues 461 to 542 (YRVMGEYMAN…LDGLESPLGR (82 aa)) are Lumenal-facing. N-linked (GlcNAc...) asparagine glycans are attached at residues N470 and N520. A helical membrane pass occupies residues 543 to 563 (LCLMGALVVSLVLNNHLIHAA). Residues 564 to 1048 (RWHAWPQARE…NRSAGATVKK (485 aa)) are Cytoplasmic-facing. Catalysis depends on E729, which acts as the Charge relay system. 735–741 (SASRGCK) contacts CoA. NADP(+)-binding positions include 796–798 (SRF) and 823–831 (DAMGMNMIS). K863 serves as the catalytic Charge relay system. 892–894 (VLK) contributes to the CoA binding site. D939 serves as the catalytic Charge relay system. 1034–1035 (AH) lines the CoA pocket. The active-site Proton donor is H1035. Residue 1039–1040 (NR) participates in NADP(+) binding.

The protein belongs to the HMG-CoA reductase family.

Its subcellular location is the endoplasmic reticulum membrane. The enzyme catalyses (R)-mevalonate + 2 NADP(+) + CoA = (3S)-3-hydroxy-3-methylglutaryl-CoA + 2 NADPH + 2 H(+). Its pathway is metabolic intermediate biosynthesis; (R)-mevalonate biosynthesis; (R)-mevalonate from acetyl-CoA: step 3/3. HMG-CoA reductase; part of the first module of ergosterol biosynthesis pathway that includes the early steps of the pathway, conserved across all eukaryotes, and which results in the formation of mevalonate from acetyl-coenzyme A (acetyl-CoA). In this module, the cytosolic acetyl-CoA acetyltransferase catalyzes the formation of acetoacetyl-CoA. The hydroxymethylglutaryl-CoA synthase then condenses acetyl-CoA with acetoacetyl-CoA to form HMG-CoA. The rate-limiting step of the early module is the reduction to mevalonate by the 3-hydroxy-3-methylglutaryl-coenzyme A (HMG-CoA) reductase. This Aspergillus terreus protein is 3-hydroxy-3-methylglutaryl-coenzyme A reductase.